A 412-amino-acid polypeptide reads, in one-letter code: L-cysteine:1D-myo-inositol 2-amino-2-deoxy-alpha-D-glucopyranoside ligase (412 aa).

Cys-43 contributes to the Zn(2+) binding site. L-cysteinyl-5'-AMP-binding positions include 43–46, Thr-58, and 81–83; these read CGIT and NVT. Positions 45 to 55 match the 'HIGH' region motif; the sequence is ITPYDATHLGH. A 'ERGGDP' region motif is present at residues 187–192; that stretch reads ERGGDP. An L-cysteinyl-5'-AMP-binding site is contributed by Trp-227. Cys-231 contacts Zn(2+). Residue 249–251 coordinates L-cysteinyl-5'-AMP; sequence GSD. His-256 contacts Zn(2+). An L-cysteinyl-5'-AMP-binding site is contributed by Ile-283. The 'KMSKS' region motif lies at 289–293; that stretch reads KMSKS.

This sequence belongs to the class-I aminoacyl-tRNA synthetase family. MshC subfamily. Monomer. Requires Zn(2+) as cofactor.

The catalysed reaction is 1D-myo-inositol 2-amino-2-deoxy-alpha-D-glucopyranoside + L-cysteine + ATP = 1D-myo-inositol 2-(L-cysteinylamino)-2-deoxy-alpha-D-glucopyranoside + AMP + diphosphate + H(+). Functionally, catalyzes the ATP-dependent condensation of GlcN-Ins and L-cysteine to form L-Cys-GlcN-Ins. The polypeptide is L-cysteine:1D-myo-inositol 2-amino-2-deoxy-alpha-D-glucopyranoside ligase (Saccharopolyspora erythraea (strain ATCC 11635 / DSM 40517 / JCM 4748 / NBRC 13426 / NCIMB 8594 / NRRL 2338)).